The primary structure comprises 890 residues: MSKDYDYRSIEAAAQADWEGAQVYQVAENAVDAQGKKKSKYYACSMLPYPSGKLHMGHVRNYTINDVMARQLRMQGYNVLMPMGWDAFGMPAENAAIQNKVPPAKWTYDNIAYMKKQMAAMGLAIDWSREVATCNPDYYRWNQWLFLKMLEKGIAYRKTQVVNWDPIDQTVLANEQVIDGRGWRSGALVEKREIPGYYFNITAYAEPLLSGLDGLGWPERVKTMQQNWIGKSRGVRFAFKHEIADDYGNFIQDGLLYVFTTRADTIMGVTFCAVAAEHPLATKAAANNSALAAFIEKCKTGSVIEADLATQEKEGMFTGLYVTHPLTYEPVPVWVGNYVLMSYGDGAVMGVPAHDERDFAFALKYELPIKQVIALKDESPMFNATCWEDWYAQKDGVVCFNSAQFDGLSHEEAVSAVAKALEKLGIGDIKTSFRLRDWGISRQRYWGTPIPIIHCGDESNPGCGAVPVPEADLPVVLPEDCVPDGSGNPLNKRADFLSVKCPKCGKPARRETDTMDTFVDSSWYFMRYTGPNAKTMVDERNEYWMPMDQYIGGIEHAILHLLYARFWTKIMRDLNLITFDEPFQNLLTQGMVLNETYYSEDASGKKTWLNPLDVELDLDEKGRPKGAKLIGDTLNTPVVVGGVEKMSKSKNNGVDPQALIDEYGADTARLFVMFAAPPEQQLEWSGAGVDGASRFLRRVWMYFSGQASALRDASDSLPSNLNDAEKELRREVHTILKQANFDYQRRQYNTVVSAAMKMLNILEPIKLDQNAAISAPVLRECLSILLRVLYPVVPHLTHVLWKEVGYAKTMGPLLDAPWPTVDEATLVQTEITLMLQINGKLRGDIKVPADANKEQVEALALQSEPAQKALNGGAPKKVIVVPGRLVNIVA.

The short motif at 48 to 58 (PYPSGKLHMGH) is the 'HIGH' region element. The 'KMSKS' region signature appears at 645-649 (KMSKS). Residue Lys-648 participates in ATP binding.

The protein belongs to the class-I aminoacyl-tRNA synthetase family.

The protein localises to the cytoplasm. The enzyme catalyses tRNA(Leu) + L-leucine + ATP = L-leucyl-tRNA(Leu) + AMP + diphosphate. The polypeptide is Leucine--tRNA ligase (Polynucleobacter necessarius subsp. necessarius (strain STIR1)).